Reading from the N-terminus, the 878-residue chain is NUT family member 2A (878 aa).

4 disordered regions span residues 273–324, 417–566, 627–757, and 775–878; these read WSQG…DDSC, QKSQ…LSYT, KEKQ…EEEE, and WLPQ…RCSQ. Pro residues-rich tracts occupy residues 278–288 and 427–444; these read PLPPPPPPAAQ and CLPP…PPAP. Positions 476-487 are enriched in basic residues; the sequence is TKARRPPPRPHR. Basic and acidic residues predominate over residues 537 to 551; that stretch reads EPEKQREEGEVKQPQ.

The protein belongs to the NUT family.

The polypeptide is NUT family member 2A (NUTM2A) (Homo sapiens (Human)).